A 1119-amino-acid polypeptide reads, in one-letter code: G8 domain-containing protein DDB_G0288475 (1119 aa).

Positions 1–22 (MKYSSFLLLFIYIFFILNNINA) are cleaved as a signal peptide. Residues 276–404 (TIWTSGVVPL…YHNTWTKLAA (129 aa)) enclose the G8 domain. N-linked (GlcNAc...) asparagine glycosylation is found at asparagine 308, asparagine 559, asparagine 736, asparagine 854, asparagine 968, asparagine 1035, asparagine 1056, and asparagine 1070.

It belongs to the comF family.

The protein localises to the secreted. The chain is G8 domain-containing protein DDB_G0288475 from Dictyostelium discoideum (Social amoeba).